Reading from the N-terminus, the 465-residue chain is Cysteine--tRNA ligase (465 aa).

Cysteine 28 serves as a coordination point for Zn(2+). The 'HIGH' region motif lies at 30-40 (PTVYNYIHVGN). Residues cysteine 208, histidine 233, and glutamate 237 each coordinate Zn(2+). The 'KMSKS' region signature appears at 265 to 269 (KMSKS). Lysine 268 contacts ATP.

The protein belongs to the class-I aminoacyl-tRNA synthetase family. As to quaternary structure, monomer. It depends on Zn(2+) as a cofactor.

The protein localises to the cytoplasm. The catalysed reaction is tRNA(Cys) + L-cysteine + ATP = L-cysteinyl-tRNA(Cys) + AMP + diphosphate. The polypeptide is Cysteine--tRNA ligase (Exiguobacterium sp. (strain ATCC BAA-1283 / AT1b)).